The following is a 444-amino-acid chain: Tol-Pal system protein TolB (444 aa).

The signal sequence occupies residues 1 to 26 (MTLFRTLAPMGLALALLLPAAVPAAA). A compositionally biased stretch (polar residues) spans 281–310 (IYTLDTGSGTRRQLTNSPSIETAPSYSPDG). The interval 281 to 311 (IYTLDTGSGTRRQLTNSPSIETAPSYSPDGS) is disordered.

It belongs to the TolB family. As to quaternary structure, the Tol-Pal system is composed of five core proteins: the inner membrane proteins TolA, TolQ and TolR, the periplasmic protein TolB and the outer membrane protein Pal. They form a network linking the inner and outer membranes and the peptidoglycan layer.

The protein resides in the periplasm. Its function is as follows. Part of the Tol-Pal system, which plays a role in outer membrane invagination during cell division and is important for maintaining outer membrane integrity. This Cereibacter sphaeroides (strain ATCC 17029 / ATH 2.4.9) (Rhodobacter sphaeroides) protein is Tol-Pal system protein TolB.